A 249-amino-acid polypeptide reads, in one-letter code: Segregation and condensation protein A (249 aa).

It belongs to the ScpA family. In terms of assembly, component of a cohesin-like complex composed of ScpA, ScpB and the Smc homodimer, in which ScpA and ScpB bind to the head domain of Smc. The presence of the three proteins is required for the association of the complex with DNA.

It localises to the cytoplasm. Participates in chromosomal partition during cell division. May act via the formation of a condensin-like complex containing Smc and ScpB that pull DNA away from mid-cell into both cell halves. The protein is Segregation and condensation protein A of Oceanobacillus iheyensis (strain DSM 14371 / CIP 107618 / JCM 11309 / KCTC 3954 / HTE831).